A 142-amino-acid polypeptide reads, in one-letter code: Photosystem II extrinsic protein U (142 aa).

Residues 1-28 (MKKIGLLLTIFSLCLGCLGLVPSDKAHA) form the signal peptide.

Belongs to the PsbU family. PSII is composed of 1 copy each of membrane proteins PsbA, PsbB, PsbC, PsbD, PsbE, PsbF, PsbH, PsbI, PsbJ, PsbK, PsbL, PsbM, PsbT, PsbX, PsbY, PsbZ, Psb30/Ycf12, peripheral proteins PsbO, CyanoQ (PsbQ), PsbU, PsbV and a large number of cofactors. It forms dimeric complexes.

Its subcellular location is the cellular thylakoid membrane. In terms of biological role, one of the extrinsic, lumenal subunits of photosystem II (PSII). PSII is a light-driven water plastoquinone oxidoreductase, using light energy to abstract electrons from H(2)O, generating a proton gradient subsequently used for ATP formation. The extrinsic proteins stabilize the structure of photosystem II oxygen-evolving complex (OEC), the ion environment of oxygen evolution and protect the OEC against heat-induced inactivation. The chain is Photosystem II extrinsic protein U from Trichodesmium erythraeum (strain IMS101).